Reading from the N-terminus, the 2513-residue chain is Probable polyketide synthase 7 (2513 aa).

The Ketosynthase family 3 (KS3) domain occupies glutamate 11–glutamate 441. Residues cysteine 181, histidine 323, and histidine 362 each act as for beta-ketoacyl synthase activity in the active site. The interval glycine 632–tyrosine 665 is acyl/malonyl transferase. Catalysis depends on serine 642, which acts as the For acyl/malonyl transferase activity. Residues isoleucine 922–asparagine 1044 are N-terminal hotdog fold. Residues isoleucine 922–serine 1206 enclose the PKS/mFAS DH domain. The active-site Proton acceptor; for dehydratase activity is histidine 956. Residues asparagine 1061–serine 1206 form a C-terminal hotdog fold region. Residue aspartate 1119 is the Proton donor; for dehydratase activity of the active site. Residues isoleucine 2426–leucine 2503 enclose the Carrier domain. At serine 2463 the chain carries O-(pantetheine 4'-phosphoryl)serine.

Requires pantetheine 4'-phosphate as cofactor.

Functionally, probable polyketide synthase. The sequence is that of Probable polyketide synthase 7 (pks7) from Dictyostelium discoideum (Social amoeba).